We begin with the raw amino-acid sequence, 96 residues long: Teretoxin Tan6.14 (96 aa).

The first 21 residues, 1 to 21 (MRPLLVFVLMVSVSLAFSLEG), serve as a signal peptide directing secretion. Positions 22–60 (MPNNGGDSVASITANQARRFKRNPLFSFAQHSLVDLKAR) are excised as a propeptide.

Contains 3 disulfide bonds. Expressed by the venom duct.

The protein localises to the secreted. The polypeptide is Teretoxin Tan6.14 (Terebra anilis (Auger snail)).